A 45-amino-acid polypeptide reads, in one-letter code: MRKRFFVGIFAINLLVGCQANYIRDVQGGTVAPSSSSKLTGISVQ.

The first 17 residues, Met1–Gly17, serve as a signal peptide directing secretion. Cys18 carries the N-palmitoyl cysteine lipid modification. Cys18 is lipidated: S-diacylglycerol cysteine.

Its subcellular location is the cell outer membrane. Functionally, lysis proteins are required for both colicin release and partial cell lysis. In Shigella sonnei, this protein is Lysis protein for colicin E1* (kil).